Here is a 349-residue protein sequence, read N- to C-terminus: Hydrophobic dipeptide epimerase (349 aa).

Substrate is bound by residues Thr127 and 153–155 (KIK). Residues Asp186, Glu212, and Asp237 each contribute to the Mg(2+) site. Substrate contacts are provided by residues Lys259 and 309–311 (DLD).

It belongs to the mandelate racemase/muconate lactonizing enzyme family. It depends on Mg(2+) as a cofactor.

In terms of biological role, catalyzes the epimerization a variety of hydrophobic dipeptides. Epimerase activity is highest with L-Ala-L-Tyr, and lower with L-Ala-L-Met, L-Ala-L-Phe, L-Tyr-L-Ala, L-Tyr-L-Met and L-Tyr-L-Trp (in vitro). The chain is Hydrophobic dipeptide epimerase from Flavobacteria bacterium (strain MS024-2A).